Here is a 315-residue protein sequence, read N- to C-terminus: Methionyl-tRNA formyltransferase (315 aa).

(6S)-5,6,7,8-tetrahydrofolate is bound at residue 113 to 116; the sequence is SLLP.

It belongs to the Fmt family.

It catalyses the reaction L-methionyl-tRNA(fMet) + (6R)-10-formyltetrahydrofolate = N-formyl-L-methionyl-tRNA(fMet) + (6S)-5,6,7,8-tetrahydrofolate + H(+). Functionally, attaches a formyl group to the free amino group of methionyl-tRNA(fMet). The formyl group appears to play a dual role in the initiator identity of N-formylmethionyl-tRNA by promoting its recognition by IF2 and preventing the misappropriation of this tRNA by the elongation apparatus. The sequence is that of Methionyl-tRNA formyltransferase from Escherichia coli O139:H28 (strain E24377A / ETEC).